The primary structure comprises 613 residues: Dihydroxy-acid dehydratase 3 (613 aa).

Asp-81 is a Mg(2+) binding site. Cys-122 serves as a coordination point for [2Fe-2S] cluster. Mg(2+) contacts are provided by Asp-123 and Lys-124. Lys-124 carries the N6-carboxylysine modification. Cys-197 provides a ligand contact to [2Fe-2S] cluster. Glu-493 is a Mg(2+) binding site. The Proton acceptor role is filled by Ser-519.

The protein belongs to the IlvD/Edd family. Homodimer. [2Fe-2S] cluster is required as a cofactor. The cofactor is Mg(2+).

The catalysed reaction is (2R)-2,3-dihydroxy-3-methylbutanoate = 3-methyl-2-oxobutanoate + H2O. It catalyses the reaction (2R,3R)-2,3-dihydroxy-3-methylpentanoate = (S)-3-methyl-2-oxopentanoate + H2O. It functions in the pathway amino-acid biosynthesis; L-isoleucine biosynthesis; L-isoleucine from 2-oxobutanoate: step 3/4. Its pathway is amino-acid biosynthesis; L-valine biosynthesis; L-valine from pyruvate: step 3/4. Functionally, functions in the biosynthesis of branched-chain amino acids. Catalyzes the dehydration of (2R,3R)-2,3-dihydroxy-3-methylpentanoate (2,3-dihydroxy-3-methylvalerate) into 2-oxo-3-methylpentanoate (2-oxo-3-methylvalerate) and of (2R)-2,3-dihydroxy-3-methylbutanoate (2,3-dihydroxyisovalerate) into 2-oxo-3-methylbutanoate (2-oxoisovalerate), the penultimate precursor to L-isoleucine and L-valine, respectively. This is Dihydroxy-acid dehydratase 3 from Nocardia farcinica (strain IFM 10152).